Consider the following 618-residue polypeptide: UvrABC system protein C (618 aa).

In terms of domain architecture, GIY-YIG spans 13 to 92 (DKPGVYLMKN…IKKYRPKYNI (80 aa)). The UVR domain maps to 204-239 (LDIVENFKLNMEKAAENLEFEKAAMLRDKINIIEKI).

It belongs to the UvrC family. Interacts with UvrB in an incision complex.

It is found in the cytoplasm. Functionally, the UvrABC repair system catalyzes the recognition and processing of DNA lesions. UvrC both incises the 5' and 3' sides of the lesion. The N-terminal half is responsible for the 3' incision and the C-terminal half is responsible for the 5' incision. This Clostridium botulinum (strain Okra / Type B1) protein is UvrABC system protein C.